We begin with the raw amino-acid sequence, 366 residues long: Protein FAM110B (366 aa).

Disordered stretches follow at residues 127–152 (SSEG…DTTD), 163–182 (KVYP…HVSR), and 216–252 (CSSS…RPSL). Residues S234 and S297 each carry the phosphoserine modification. The tract at residues 313–333 (DCEQSQDSNSDLRNDDSANDR) is disordered. Residues 322 to 331 (SDLRNDDSAN) show a composition bias toward basic and acidic residues.

Belongs to the FAM110 family.

Its subcellular location is the cytoplasm. It is found in the cytoskeleton. It localises to the microtubule organizing center. The protein localises to the centrosome. In Mus musculus (Mouse), this protein is Protein FAM110B (Fam110b).